A 167-amino-acid chain; its full sequence is Translationally-controlled tumor protein homolog (167 aa).

A TCTP domain is found at 1 to 167 (MIIFTDVISG…WKHGVSEDKI (167 aa)).

The protein belongs to the TCTP family.

It is found in the cytoplasm. It localises to the cytoskeleton. Its function is as follows. Involved in protein synthesis. Involved in microtubule stabilization. The protein is Translationally-controlled tumor protein homolog of Debaryomyces hansenii (strain ATCC 36239 / CBS 767 / BCRC 21394 / JCM 1990 / NBRC 0083 / IGC 2968) (Yeast).